A 722-amino-acid polypeptide reads, in one-letter code: Glycine--tRNA ligase beta subunit (722 aa).

Belongs to the class-II aminoacyl-tRNA synthetase family. Tetramer of two alpha and two beta subunits.

The protein resides in the cytoplasm. It carries out the reaction tRNA(Gly) + glycine + ATP = glycyl-tRNA(Gly) + AMP + diphosphate. The protein is Glycine--tRNA ligase beta subunit of Xylella fastidiosa (strain Temecula1 / ATCC 700964).